A 355-amino-acid chain; its full sequence is Elongation factor Ts (355 aa).

An involved in Mg(2+) ion dislocation from EF-Tu region spans residues 82–85 (TDFV).

It belongs to the EF-Ts family.

It localises to the cytoplasm. Associates with the EF-Tu.GDP complex and induces the exchange of GDP to GTP. It remains bound to the aminoacyl-tRNA.EF-Tu.GTP complex up to the GTP hydrolysis stage on the ribosome. The chain is Elongation factor Ts from Helicobacter pylori (strain G27).